The chain runs to 377 residues: Naringenin,2-oxoglutarate 3-dioxygenase (377 aa).

The Fe2OG dioxygenase domain occupies 193-297 (CVDMDQKVVV…RLSIATFQNP (105 aa)). The Fe cation site is built by His220, Asp222, and His278. Arg288 is a 2-oxoglutarate binding site.

It belongs to the iron/ascorbate-dependent oxidoreductase family. The cofactor is Fe(2+). L-ascorbate is required as a cofactor.

It catalyses the reaction a (2S)-flavan-4-one + 2-oxoglutarate + O2 = a (2R,3R)-dihydroflavonol + succinate + CO2. It participates in secondary metabolite biosynthesis; flavonoid biosynthesis. Functionally, catalyzes the 3-beta-hydroxylation of 2S-flavanones to 2R,3R-dihydroflavonols which are intermediates in the biosynthesis of flavonols, anthocyanidins, catechins and proanthocyanidins in plants. The sequence is that of Naringenin,2-oxoglutarate 3-dioxygenase from Hordeum vulgare (Barley).